Consider the following 35-residue polypeptide: Photosystem II reaction center protein M (35 aa).

The chain crosses the membrane as a helical span at residues 5 to 25; sequence ILGLIATALFILIPTSFLIIL.

This sequence belongs to the PsbM family. PSII is composed of 1 copy each of membrane proteins PsbA, PsbB, PsbC, PsbD, PsbE, PsbF, PsbH, PsbI, PsbJ, PsbK, PsbL, PsbM, PsbT, PsbX, PsbY, PsbZ, Psb30/Ycf12, at least 3 peripheral proteins of the oxygen-evolving complex and a large number of cofactors. It forms dimeric complexes.

The protein localises to the plastid. The protein resides in the chloroplast thylakoid membrane. Functionally, one of the components of the core complex of photosystem II (PSII). PSII is a light-driven water:plastoquinone oxidoreductase that uses light energy to abstract electrons from H(2)O, generating O(2) and a proton gradient subsequently used for ATP formation. It consists of a core antenna complex that captures photons, and an electron transfer chain that converts photonic excitation into a charge separation. This subunit is found at the monomer-monomer interface. This chain is Photosystem II reaction center protein M, found in Oltmannsiellopsis viridis (Marine flagellate).